Reading from the N-terminus, the 118-residue chain is MSDLDEIRRKRMAELEARQAAAQGQMQQQAQQQMQQQEAQRQFEEQKKALIAQILTTEARSRLANLKLTKPELVNQIEIQLIQSAQAGSLRGKVTDEQLKVLLRQIAGQKREIKITRK.

The tract at residues 16-39 (EARQAAAQGQMQQQAQQQMQQQEA) is disordered. Low complexity predominate over residues 18–39 (RQAAAQGQMQQQAQQQMQQQEA).

This sequence belongs to the PDCD5 family.

This is DNA-binding protein Msm_0708 from Methanobrevibacter smithii (strain ATCC 35061 / DSM 861 / OCM 144 / PS).